The following is a 538-amino-acid chain: DALR anticodon-binding domain-containing protein 3 (538 aa).

Part of a complex containing tRNA(Arg) and METTL2. Interacts with tRNA(Arg)(CCU) and tRNA(Arg)(UCU). Interacts with METTL2.

Its function is as follows. Involved in tRNA methylation. Facilitates the recognition and targeting of tRNA(Arg)(CCU) and tRNA(Arg)(UCU) substrates for N(3)-methylcytidine modification by METTL2. The sequence is that of DALR anticodon-binding domain-containing protein 3 (Dalrd3) from Mus musculus (Mouse).